The primary structure comprises 140 residues: Large ribosomal subunit protein uL22 (140 aa).

The protein belongs to the universal ribosomal protein uL22 family. Part of the 50S ribosomal subunit.

In terms of biological role, this protein binds specifically to 23S rRNA; its binding is stimulated by other ribosomal proteins, e.g. L4, L17, and L20. It is important during the early stages of 50S assembly. It makes multiple contacts with different domains of the 23S rRNA in the assembled 50S subunit and ribosome. Its function is as follows. The globular domain of the protein is located near the polypeptide exit tunnel on the outside of the subunit, while an extended beta-hairpin is found that lines the wall of the exit tunnel in the center of the 70S ribosome. In Parafrankia sp. (strain EAN1pec), this protein is Large ribosomal subunit protein uL22.